The chain runs to 768 residues: Translation factor GUF1 homolog, mitochondrial (768 aa).

The N-terminal 29 residues, 1–29 (MRLWNRFSRLGNLLCACAACGCSFTPWRC), are a transit peptide targeting the mitochondrion. The tr-type G domain maps to 110 to 293 (SNIRNVAVVA…AIIERVPSPS (184 aa)). Residues 119 to 126 (AHVDHGKT), 184 to 188 (DTPGH), and 238 to 241 (TKMD) each bind GTP.

This sequence belongs to the TRAFAC class translation factor GTPase superfamily. Classic translation factor GTPase family. LepA subfamily.

The protein resides in the mitochondrion inner membrane. It carries out the reaction GTP + H2O = GDP + phosphate + H(+). Its function is as follows. Promotes mitochondrial protein synthesis. May act as a fidelity factor of the translation reaction, by catalyzing a one-codon backward translocation of tRNAs on improperly translocated ribosomes. Binds to mitochondrial ribosomes in a GTP-dependent manner. This Trypanosoma brucei brucei (strain 927/4 GUTat10.1) protein is Translation factor GUF1 homolog, mitochondrial.